We begin with the raw amino-acid sequence, 217 residues long: Adenylate kinase (217 aa).

10-15 (GAGKGT) lines the ATP pocket. The segment at 30-59 (STGDMFRAAMKNETELGLKAKSFIDAGDLV) is NMP. AMP contacts are provided by residues threonine 31, arginine 36, 57–59 (DLV), 85–88 (GFPR), and glutamine 92. Positions 126–163 (GRRVSPTTGKTYHIVYNPPKVEGKCDIDGSDLIQRDDD) are LID. Residues arginine 127 and 136–137 (TY) contribute to the ATP site. Residues arginine 160 and arginine 171 each contribute to the AMP site. Glutamine 199 provides a ligand contact to ATP.

Belongs to the adenylate kinase family. As to quaternary structure, monomer.

It localises to the cytoplasm. The catalysed reaction is AMP + ATP = 2 ADP. Its pathway is purine metabolism; AMP biosynthesis via salvage pathway; AMP from ADP: step 1/1. In terms of biological role, catalyzes the reversible transfer of the terminal phosphate group between ATP and AMP. Plays an important role in cellular energy homeostasis and in adenine nucleotide metabolism. The chain is Adenylate kinase from Shouchella clausii (strain KSM-K16) (Alkalihalobacillus clausii).